The sequence spans 1050 residues: Isoleucine--tRNA ligase (1050 aa).

Residues 45–56 (PYPSSPIPHIGT) carry the 'HIGH' region motif. Positions 594–598 (EMHKS) match the 'KMSKS' region motif. K597 provides a ligand contact to ATP.

This sequence belongs to the class-I aminoacyl-tRNA synthetase family. IleS type 2 subfamily. As to quaternary structure, monomer. The cofactor is Zn(2+).

It localises to the cytoplasm. It carries out the reaction tRNA(Ile) + L-isoleucine + ATP = L-isoleucyl-tRNA(Ile) + AMP + diphosphate. In terms of biological role, catalyzes the attachment of isoleucine to tRNA(Ile). As IleRS can inadvertently accommodate and process structurally similar amino acids such as valine, to avoid such errors it has two additional distinct tRNA(Ile)-dependent editing activities. One activity is designated as 'pretransfer' editing and involves the hydrolysis of activated Val-AMP. The other activity is designated 'posttransfer' editing and involves deacylation of mischarged Val-tRNA(Ile). The sequence is that of Isoleucine--tRNA ligase from Sulfolobus acidocaldarius (strain ATCC 33909 / DSM 639 / JCM 8929 / NBRC 15157 / NCIMB 11770).